The sequence spans 811 residues: TLR4 interactor with leucine rich repeats (811 aa).

Positions 1–25 (MEGVGAVRFWLVVCGCLAFPPRAES) are cleaved as a signal peptide. One can recognise an LRRNT domain in the interval 26–57 (VCPERCDCQHPQHLLCTNRGLRAVPKTSSLPS). Residues 26–696 (VCPERCDCQH…AGGRGGVDYQ (671 aa)) lie on the Extracellular side of the membrane. LRR repeat units follow at residues 61–81 (VLTY…DFHR), 84–105 (QLRR…TFEK), 108–129 (RLEE…TLAP), 132–153 (KLRI…SFEG), 156–177 (SLVK…VFAP), 180–201 (NLLY…AFTQ), 204–223 (KLRF…RHAA), 230–251 (SLST…VFQH), 254–275 (RLGL…AFWG), 278–298 (ALRE…TLLE), 302–323 (SLEA…TFGH), and 326–347 (RLRE…IFAA). Residue Asn-73 is glycosylated (N-linked (GlcNAc...) asparagine). The region spanning 359 to 416 (NGWTCDCRLRGLKRWMGNWHSQGRLLTVFVQCRHPPALRGKYLDYLDDQLLQNGSCVD) is the LRRCT domain. Asn-411 is a glycosylation site (N-linked (GlcNAc...) asparagine). Disordered regions lie at residues 414 to 460 (CVDP…QQRG) and 486 to 562 (RRGP…QQGR). The span at 421–430 (PTAGSRQWPI) shows a compositional bias: polar residues. Composition is skewed to low complexity over residues 440–460 (PPAG…QQRG) and 494–508 (QSPS…APQS). Over residues 510–519 (DLHEKPERGR) the composition is skewed to basic and acidic residues. Residues 524-545 (NLPQTEPTPTSEPASGTPSARD) show a composition bias toward polar residues. Asn-589 carries N-linked (GlcNAc...) asparagine glycosylation. The helical transmembrane segment at 697–717 (LLTLVLLAINALLVLLALAAW) threads the bilayer. The Cytoplasmic segment spans residues 718–809 (GSRWLRRKLR…RREDHLLQRF (92 aa)). Ser-798 bears the Phosphoserine mark.

In terms of assembly, belongs to the lipopolysaccharide (LPS) receptor, a multi-protein complex containing at least CD14, MD-2 and TLR4. Interacts with TLR4; this interaction is greatly enhanced following LPS stimulation. Interacts with LPS. In terms of processing, N-glycolysaled. As to expression, highly expressed in cortical astrocytes and in cerebellar granule neurons.

The protein resides in the membrane. Its function is as follows. Component of the TLR4 signaling complex. Mediates the innate immune response to bacterial lipopolysaccharide (LPS) leading to cytokine secretion and the inflammatory response. This is TLR4 interactor with leucine rich repeats (Tril) from Rattus norvegicus (Rat).